The chain runs to 152 residues: Deoxyuridine 5'-triphosphate nucleotidohydrolase (152 aa).

Substrate contacts are provided by residues 71-73 (RSG), asparagine 84, 88-90 (LID), and methionine 98.

Belongs to the dUTPase family. Mg(2+) is required as a cofactor.

It carries out the reaction dUTP + H2O = dUMP + diphosphate + H(+). Its pathway is pyrimidine metabolism; dUMP biosynthesis; dUMP from dCTP (dUTP route): step 2/2. In terms of biological role, this enzyme is involved in nucleotide metabolism: it produces dUMP, the immediate precursor of thymidine nucleotides and it decreases the intracellular concentration of dUTP so that uracil cannot be incorporated into DNA. This Pectobacterium carotovorum subsp. carotovorum (strain PC1) protein is Deoxyuridine 5'-triphosphate nucleotidohydrolase.